A 383-amino-acid polypeptide reads, in one-letter code: Acetylornithine deacetylase (383 aa).

His80 is a binding site for Zn(2+). The active site involves Asp82. A Zn(2+)-binding site is contributed by Asp112. Glu144 is an active-site residue. Zn(2+) contacts are provided by Glu145, Glu169, and His355.

The protein belongs to the peptidase M20A family. ArgE subfamily. In terms of assembly, homodimer. Zn(2+) is required as a cofactor. It depends on Co(2+) as a cofactor. Glutathione serves as cofactor.

It is found in the cytoplasm. It carries out the reaction N(2)-acetyl-L-ornithine + H2O = L-ornithine + acetate. It functions in the pathway amino-acid biosynthesis; L-arginine biosynthesis; L-ornithine from N(2)-acetyl-L-ornithine (linear): step 1/1. Catalyzes the hydrolysis of the amide bond of N(2)-acetylated L-amino acids. Cleaves the acetyl group from N-acetyl-L-ornithine to form L-ornithine, an intermediate in L-arginine biosynthesis pathway, and a branchpoint in the synthesis of polyamines. This chain is Acetylornithine deacetylase, found in Escherichia coli (strain SMS-3-5 / SECEC).